The chain runs to 142 residues: Universal stress protein G (142 aa).

This sequence belongs to the universal stress protein A family.

The chain is Universal stress protein G (uspG) from Escherichia coli O157:H7.